We begin with the raw amino-acid sequence, 811 residues long: Serine/threonine-protein kinase prpf4B (811 aa).

Disordered regions lie at residues 1-257, 288-341, 353-379, and 408-452; these read MVIE…TNEP, EKYN…NQIE, KDQN…EDLK, and VSIK…TNGG. A compositionally biased stretch (low complexity) spans 46–71; sequence SSPASRETSSSKLMSPSKNQSSSSSR. Positions 81–202 are enriched in basic and acidic residues; that stretch reads RRKDERYSSS…DNMDSRDNKN (122 aa). Positions 203–215 are enriched in polar residues; it reads GSRQSINNNTLSY. Basic and acidic residues predominate over residues 217 to 240; that stretch reads KQADRKDEVRVKDNISVNDDKTNH. 2 stretches are compositionally biased toward polar residues: residues 241–257 and 293–302; these read GENL…TNEP and EQPQPITSSL. Low complexity predominate over residues 310-327; the sequence is SNTNTNSNSTPVATTTTS. Positions 490–808 constitute a Protein kinase domain; sequence YQIFSPIGSG…PFEALNHEFL (319 aa). Residues 496-504 and Lys-519 contribute to the ATP site; that span reads IGSGVFSTV. The active-site Proton acceptor is the Asp-619.

It belongs to the protein kinase superfamily. CMGC Ser/Thr protein kinase family. Phosphorylated. Autophosphorylated; phosphorylation inhibits interaction with its targets.

It localises to the nucleus. It is found in the chromosome. The protein localises to the centromere. The protein resides in the kinetochore. The catalysed reaction is L-seryl-[protein] + ATP = O-phospho-L-seryl-[protein] + ADP + H(+). It carries out the reaction L-threonyl-[protein] + ATP = O-phospho-L-threonyl-[protein] + ADP + H(+). In terms of biological role, serine/threonine kinase involved in spliceosomal assembly as well as mitosis and signaling regulation. This Dictyostelium discoideum (Social amoeba) protein is Serine/threonine-protein kinase prpf4B (prp4k).